Consider the following 274-residue polypeptide: 2,3,4,5-tetrahydropyridine-2,6-dicarboxylate N-succinyltransferase (274 aa).

2 residues coordinate substrate: R107 and D144.

This sequence belongs to the transferase hexapeptide repeat family. In terms of assembly, homotrimer.

It is found in the cytoplasm. The enzyme catalyses (S)-2,3,4,5-tetrahydrodipicolinate + succinyl-CoA + H2O = (S)-2-succinylamino-6-oxoheptanedioate + CoA. It participates in amino-acid biosynthesis; L-lysine biosynthesis via DAP pathway; LL-2,6-diaminopimelate from (S)-tetrahydrodipicolinate (succinylase route): step 1/3. The chain is 2,3,4,5-tetrahydropyridine-2,6-dicarboxylate N-succinyltransferase from Paracoccus denitrificans (strain Pd 1222).